The sequence spans 449 residues: Biotin carboxylase (449 aa).

The Biotin carboxylation domain occupies 1 to 445 (MLDKIVIANR…NIHYLEKKLG (445 aa)). ATP contacts are provided by residues Lys116, Lys159, 165–166 (GG), 201–204 (EKYL), His209, and His236. Residues 120–317 (IAAMKKAGVP…LIKEQLRIAA (198 aa)) form the ATP-grasp domain. Lys238 serves as a coordination point for hydrogencarbonate. ATP is bound by residues Glu276 and Glu288. Mg(2+) contacts are provided by Glu276, Glu288, and Asn290. Mn(2+) is bound by residues Glu276, Glu288, and Asn290. Hydrogencarbonate is bound by residues Arg292, Val295, and Arg338. Arg292 is an active-site residue. Arg338 is a biotin binding site.

As to quaternary structure, acetyl-CoA carboxylase is a heterohexamer of biotin carboxyl carrier protein, biotin carboxylase and the two subunits of carboxyl transferase in a 2:2 complex. The cofactor is Mg(2+). Requires Mn(2+) as cofactor.

The catalysed reaction is N(6)-biotinyl-L-lysyl-[protein] + hydrogencarbonate + ATP = N(6)-carboxybiotinyl-L-lysyl-[protein] + ADP + phosphate + H(+). It functions in the pathway lipid metabolism; malonyl-CoA biosynthesis; malonyl-CoA from acetyl-CoA: step 1/1. Functionally, this protein is a component of the acetyl coenzyme A carboxylase complex; first, biotin carboxylase catalyzes the carboxylation of the carrier protein and then the transcarboxylase transfers the carboxyl group to form malonyl-CoA. The polypeptide is Biotin carboxylase (accC) (Escherichia coli O157:H7).